A 439-amino-acid polypeptide reads, in one-letter code: L-tryptophan decarboxylase (439 aa).

Belongs to the phosphatidylserine decarboxylase family.

The catalysed reaction is L-tryptophan + H(+) = tryptamine + CO2. It participates in secondary metabolite biosynthesis. L-tryptophan decarboxylase; part of the gene cluster that mediates the biosynthesis of psilocybin, a psychotropic tryptamine-derived natural product. The first step in the pathway is the decarboxylation of L-tryptophan to tryptamine by the decarboxylase psiD. 4-hydroxy-L-tryptophan is accepted as substrate by psiD as well. The cytochrome P450 monooxygenase psiH then converts tryptamine to 4-hydroxytryptamine. The kinase psiK catalyzes the 4-O-phosphorylation step by converting 4-hydroxytryptamine into norbaeocystin. The methyltransferase psiM then catalyzes iterative methyl transfer to the amino group of norbaeocystin to yield psilocybin via a monomethylated intermediate, baeocystin. 4-hydroxy-6-methyl-l-tryptophancan also be converted the decarboxylase PsiD, kinase PsiK, and methyltransferase PsiM into respectively 6-methyl-norbaeocystin, 6-methylbaeocystin, and 6-methylpsilocybin. This Psilocybe cubensis (Psychedelic mushroom) protein is L-tryptophan decarboxylase.